Here is a 134-residue protein sequence, read N- to C-terminus: Pre-histone-like nucleoprotein (134 aa).

Positions 2–23 (AILISPTNNTGWGLGTHKLFGG) are excised as a propeptide. Residues 40-62 (RASWGSKGRRRRQGRARGAPLDP) are disordered. The Nuclear localization signal signature appears at 125–134 (KRKRRVRFRQ).

The protein belongs to the adenoviridae histone-like nucleoprotein family. As to quaternary structure, interacts with the core-capsid bridging protein; this interaction bridges the virus core to the capsid. Interacts with host NPM1; this interaction might play a role in placing the pre-histone-like nucleoprotein on the viral DNA or regulating viral gene expression. Interacts with host HMGB1; this interaction inhibits host immune response. In terms of processing, cleaved near the N-terminus by the viral protease during virion maturation to form the mature protein.

The protein localises to the virion. The protein resides in the host nucleus. It is found in the host nucleolus. Its function is as follows. Plays a role in the inhibition of host immune response within the nucleus. Interacts with cellular nucleosomes and immobilizes the host immune danger signal HMGB1 on chromatin. In turn, prevents HMGB1 release out of the cell and thus decreases inflammation. Also plays a role in the wrapping and condensation of the viral DNA. May also promote viral genome import into the nucleus. This Canis lupus familiaris (Dog) protein is Pre-histone-like nucleoprotein.